The chain runs to 181 residues: Large ribosomal subunit protein uL10 (181 aa).

The protein belongs to the universal ribosomal protein uL10 family. Part of the ribosomal stalk of the 50S ribosomal subunit. The N-terminus interacts with L11 and the large rRNA to form the base of the stalk. The C-terminus forms an elongated spine to which L12 dimers bind in a sequential fashion forming a multimeric L10(L12)X complex.

In terms of biological role, forms part of the ribosomal stalk, playing a central role in the interaction of the ribosome with GTP-bound translation factors. The sequence is that of Large ribosomal subunit protein uL10 from Protochlamydia amoebophila (strain UWE25).